The sequence spans 929 residues: Protein translocase subunit SecA (929 aa).

ATP-binding positions include Gln-87, Gly-105–Thr-109, and Asp-512. Residues Cys-914, Cys-916, Cys-925, and His-926 each contribute to the Zn(2+) site.

This sequence belongs to the SecA family. Monomer and homodimer. Part of the essential Sec protein translocation apparatus which comprises SecA, SecYEG and auxiliary proteins SecDF-YajC and YidC. Requires Zn(2+) as cofactor.

It is found in the cell inner membrane. The protein resides in the cytoplasm. The enzyme catalyses ATP + H2O + cellular proteinSide 1 = ADP + phosphate + cellular proteinSide 2.. Its function is as follows. Part of the Sec protein translocase complex. Interacts with the SecYEG preprotein conducting channel. Has a central role in coupling the hydrolysis of ATP to the transfer of proteins into and across the cell membrane, serving both as a receptor for the preprotein-SecB complex and as an ATP-driven molecular motor driving the stepwise translocation of polypeptide chains across the membrane. This is Protein translocase subunit SecA from Psychrobacter arcticus (strain DSM 17307 / VKM B-2377 / 273-4).